A 309-amino-acid polypeptide reads, in one-letter code: ATP synthase gamma chain (309 aa).

It belongs to the ATPase gamma chain family. As to quaternary structure, F-type ATPases have 2 components, CF(1) - the catalytic core - and CF(0) - the membrane proton channel. CF(1) has five subunits: alpha(3), beta(3), gamma(1), delta(1), epsilon(1). CF(0) has three main subunits: a, b and c.

The protein localises to the cell membrane. Functionally, produces ATP from ADP in the presence of a proton gradient across the membrane. The gamma chain is believed to be important in regulating ATPase activity and the flow of protons through the CF(0) complex. This chain is ATP synthase gamma chain, found in Salinispora tropica (strain ATCC BAA-916 / DSM 44818 / JCM 13857 / NBRC 105044 / CNB-440).